An 873-amino-acid polypeptide reads, in one-letter code: Disks large homolog 1 (873 aa).

The L27 domain maps to 4-64; the sequence is RQKDAQRALQ…YYEVSLQDTE (61 aa). The segment at 62 to 135 is disordered; the sequence is DTEDKPIEDS…SPHIPGDARP (74 aa). Residues 63–77 are compositionally biased toward basic and acidic residues; the sequence is TEDKPIEDSSLKSRE. Over residues 85–96 the composition is skewed to polar residues; that stretch reads WNLSVPPSTTGP. 2 PDZ domains span residues 230–317 and 325–412; these read EITL…RRRK and DVKL…AKPT. Positions 441-456 are enriched in polar residues; the sequence is SYLSQPLTPATPSRYS. The interval 441–464 is disordered; it reads SYLSQPLTPATPSRYSPVSKGMLG. The PDZ 3 domain occupies 474–555; the sequence is KIVLHRGTTG…TVTIIAQYRP (82 aa). The segment at 636–662 is disordered; the sequence is NKDSGEQDTSDVDQHVTSNASDSESSF. The segment covering 650–662 has biased composition (polar residues); sequence HVTSNASDSESSF. The Guanylate kinase-like domain occupies 683-858; the sequence is SRPVIILGPM…IYNQVKQIIE (176 aa).

Belongs to the MAGUK family.

Its subcellular location is the cell membrane. It is found in the endoplasmic reticulum membrane. The protein resides in the cell junction. It localises to the apical cell membrane. Essential multidomain scaffolding protein required for normal development. Recruits channels, receptors and signaling molecules to discrete plasma membrane domains in polarized cells. Promotes epithelial cell layer barrier function via maintaining cell-cell adhesion. May play a role in adherens junction assembly, signal transduction and cell proliferation. May play a role in synapse assembly and function. In Danio rerio (Zebrafish), this protein is Disks large homolog 1 (dlg1).